Consider the following 215-residue polypeptide: FMN-dependent NADH:quinone oxidoreductase (215 aa).

Serine 17–serine 19 contributes to the FMN binding site.

It belongs to the azoreductase type 1 family. In terms of assembly, homodimer. The cofactor is FMN.

It carries out the reaction 2 a quinone + NADH + H(+) = 2 a 1,4-benzosemiquinone + NAD(+). The enzyme catalyses N,N-dimethyl-1,4-phenylenediamine + anthranilate + 2 NAD(+) = 2-(4-dimethylaminophenyl)diazenylbenzoate + 2 NADH + 2 H(+). Functionally, quinone reductase that provides resistance to thiol-specific stress caused by electrophilic quinones. Also exhibits azoreductase activity. Catalyzes the reductive cleavage of the azo bond in aromatic azo compounds to the corresponding amines. The protein is FMN-dependent NADH:quinone oxidoreductase of Clostridium botulinum (strain Eklund 17B / Type B).